Consider the following 201-residue polypeptide: Ras-related protein Rab-1B (201 aa).

M1 carries the N-acetylmethionine modification. S17, G18, V19, G20, K21, S22, C23, Y33, T34, E35, S36, S39, and T40 together coordinate GTP. Mg(2+) is bound at residue S22. Residues 30 to 45 (DDTYTESYISTIGVDF) carry the Switch 1 motif. Mg(2+)-binding residues include T40 and D63. Positions 64-83 (TAGQERGRTITSSYYRGAHG) are switch 2 region; required for interaction with REP1/CHM. The Switch 2 motif lies at 65–80 (AGQERGRTITSSYYRG). G66, N121, K122, D124, S151, A152, and K153 together coordinate GTP. The disordered stretch occupies residues 173–201 (MGPGAASGGERPNLKIDSTPVKQAGGGCC). Residues C200 and C201 are each lipidated (S-geranylgeranyl cysteine). A Cysteine methyl ester modification is found at C201.

It belongs to the small GTPase superfamily. Rab family. Interacts with MICAL1 and MICAL2. Interacts (in GTP-bound form) with MICALCL, MICAL1 and MILCAL3. Interacts with GDI1; the interaction requires the GDP-bound state. Interacts with CHM/REP1; the interaction requires the GDP-bound form and is necessary for prenylation by GGTase II. Interacts with RabGAP TBC1D20. Interacts (in GDP-bound form) with lipid phosphatase MTMR6 (via GRAM domain); the interaction regulates MTMR6 recruitment to the endoplasmic reticulum-Golgi intermediate compartment. Interacts (in GDP-bound form) with lipid phosphatase MTMR7. It depends on Mg(2+) as a cofactor. Post-translationally, prenylated; by GGTase II, only after interaction of the substrate with Rab escort protein 1 (REP1).

It localises to the cytoplasm. It is found in the membrane. Its subcellular location is the preautophagosomal structure membrane. The protein resides in the perinuclear region. It catalyses the reaction GTP + H2O = GDP + phosphate + H(+). Regulated by guanine nucleotide exchange factors (GEFs) which promote the exchange of bound GDP for free GTP. Regulated by GTPase activating proteins (GAPs) including TBC1D20 which increases the GTP hydrolysis activity. Inhibited by GDP dissociation inhibitors (GDIs). Functionally, the small GTPases Rab are key regulators of intracellular membrane trafficking, from the formation of transport vesicles to their fusion with membranes. Rabs cycle between an inactive GDP-bound form and an active GTP-bound form that is able to recruit to membranes different set of downstream effectors directly responsible for vesicle formation, movement, tethering and fusion. Plays a role in the initial events of the autophagic vacuole development which take place at specialized regions of the endoplasmic reticulum. Regulates vesicular transport between the endoplasmic reticulum and successive Golgi compartments. Required to modulate the compacted morphology of the Golgi. Promotes the recruitment of lipid phosphatase MTMR6 to the endoplasmic reticulum-Golgi intermediate compartment. The polypeptide is Ras-related protein Rab-1B (RAB1B) (Sus scrofa (Pig)).